Here is a 112-residue protein sequence, read N- to C-terminus: uncharacterized protein (112 aa).

To Buchnera BUsg564.

This is an uncharacterized protein from Buchnera aphidicola subsp. Acyrthosiphon pisum (strain APS) (Acyrthosiphon pisum symbiotic bacterium).